The primary structure comprises 218 residues: Small ribosomal subunit protein uS3c (218 aa).

Positions 47–118 (VRRHMKNYSN…KLNISIAKVA (72 aa)) constitute a KH type-2 domain.

Belongs to the universal ribosomal protein uS3 family. In terms of assembly, part of the 30S ribosomal subunit.

It localises to the plastid. It is found in the chloroplast. This is Small ribosomal subunit protein uS3c (rps3) from Ginkgo biloba (Ginkgo).